The chain runs to 839 residues: MANILRKVIENDKGELRKLEKIAKKVESYADQMVSLSDRDLQGKTLEFKERYQKGETLEQLLPEAFAVVREAAKRVLGLFPYRVQIMGGIVLHNGDVPEMRTGEGKTLTATMPVYLNAIAGEGVHVITVNEYLSTRDATEMGEVYSWLGLSVGINLAAKSPAEKREAYNCDITYSTNSEVGFDYLRDNMVVRQEDMVQRPLNFALVDEVDSVLIDEARTPLIVSGAVSSETNQLYIRADMFVKTLTSVDYVIDVPTKTIGLSDSGIDKAESYFNLSNLYDIENVALTHFIDNALRANYIMLLDIDYVVSEDGEILIVDQFTGRTMEGRRFSDGLHQAIEAKEGVRIQEESKTSASITYQNMFRMYKKLAGMTGTAKTEEEEFREVYNMRIIPIPTNRPIARIDHTDLLYPTLESKFRAVVEDVKTRHAKGQPILVGTVAVETSDLISRKLVEAGIPHEVLNAKNHFKEAQIIMNAGQRGAVTIATNMAGRGTDIKLGEGVRELGGLCVIGTERHESRRIDNQLRGRSGRQGDPGESQFYLSLEDDLMRRFGSDRIKAFLDRMKLDEEDTVIKSGMLGRQVESAQKRVEGNNYDTRKQVLQYDDVMREQREIIYANRRDVITANRDLGPEIKAMIKRTIDRAVDAHARSNRKDAIDAIVTFARTSLVPEESISAKELRGLKDDQIKEKLYQRALAIYDQQLSKLRDQEAIIEFQKVLILMIVDNKWTEHIDALDQLRNAVGLRGYAQNNPVVEYQAEGFKMFQDMIGAIEFDVTRTMMKAQIHEQERERASQRATTAAPQNIQSQQSANTDDLPKVERNEACPCGSGKKFKNCHGRKSFS.

ATP is bound by residues Gln85, 103 to 107, and Asp493; that span reads GEGKT. Basic and acidic residues predominate over residues 780 to 790; it reads QIHEQERERAS. The tract at residues 780–839 is disordered; it reads QIHEQERERASQRATTAAPQNIQSQQSANTDDLPKVERNEACPCGSGKKFKNCHGRKSFS. Positions 791–809 are enriched in polar residues; sequence QRATTAAPQNIQSQQSANT. 4 residues coordinate Zn(2+): Cys821, Cys823, Cys832, and His833. A compositionally biased stretch (basic residues) spans 827-839; the sequence is KKFKNCHGRKSFS.

The protein belongs to the SecA family. Monomer and homodimer. Part of the essential Sec protein translocation apparatus which comprises SecA, SecYEG and auxiliary proteins SecDF. Other proteins may also be involved. It depends on Zn(2+) as a cofactor.

The protein resides in the cell membrane. The protein localises to the cytoplasm. It carries out the reaction ATP + H2O + cellular proteinSide 1 = ADP + phosphate + cellular proteinSide 2.. Its function is as follows. Part of the Sec protein translocase complex. Interacts with the SecYEG preprotein conducting channel. Has a central role in coupling the hydrolysis of ATP to the transfer of proteins into and across the cell membrane, serving as an ATP-driven molecular motor driving the stepwise translocation of polypeptide chains across the membrane. This Streptococcus pyogenes serotype M28 (strain MGAS6180) protein is Protein translocase subunit SecA.